A 272-amino-acid chain; its full sequence is MLTKRIIPCLDIKEGRVVKGTNFLELRDAGDPVELSKIYNEQGADELVFLDITASFEKRDIIIDVVKRTAEQVFIPLTVGGGIKTVEDFRRILRAGADKISINTSAVKNPELIKEASEIFGTQCVVVAIDVKRNYINDSNDKNLSGKYIFESKNGKFWFEVYIYGGREGTGIDAINWAKKVENLGAGEILLTSMDADGTKDGYDITLTKAISESVKLPVIASGGCGSSAHVVEVFKNGNADAALMASILHYRETDVQKIKKEVQKNNIPVRI.

Active-site residues include Asp11 and Asp130.

The protein belongs to the HisA/HisF family. In terms of assembly, heterodimer of HisH and HisF.

The protein localises to the cytoplasm. It carries out the reaction 5-[(5-phospho-1-deoxy-D-ribulos-1-ylimino)methylamino]-1-(5-phospho-beta-D-ribosyl)imidazole-4-carboxamide + L-glutamine = D-erythro-1-(imidazol-4-yl)glycerol 3-phosphate + 5-amino-1-(5-phospho-beta-D-ribosyl)imidazole-4-carboxamide + L-glutamate + H(+). It participates in amino-acid biosynthesis; L-histidine biosynthesis; L-histidine from 5-phospho-alpha-D-ribose 1-diphosphate: step 5/9. Functionally, IGPS catalyzes the conversion of PRFAR and glutamine to IGP, AICAR and glutamate. The HisF subunit catalyzes the cyclization activity that produces IGP and AICAR from PRFAR using the ammonia provided by the HisH subunit. The polypeptide is Imidazole glycerol phosphate synthase subunit HisF (Methanococcus vannielii (strain ATCC 35089 / DSM 1224 / JCM 13029 / OCM 148 / SB)).